The following is a 488-amino-acid chain: Protein nucleotidyltransferase YdiU (488 aa).

Positions 91, 93, 94, 114, 126, 127, 177, and 184 each coordinate ATP. Aspartate 253 serves as the catalytic Proton acceptor. Mg(2+) contacts are provided by asparagine 254 and aspartate 263. Aspartate 263 contributes to the ATP binding site.

Belongs to the SELO family. Mg(2+) serves as cofactor. Mn(2+) is required as a cofactor.

The catalysed reaction is L-seryl-[protein] + ATP = 3-O-(5'-adenylyl)-L-seryl-[protein] + diphosphate. It catalyses the reaction L-threonyl-[protein] + ATP = 3-O-(5'-adenylyl)-L-threonyl-[protein] + diphosphate. It carries out the reaction L-tyrosyl-[protein] + ATP = O-(5'-adenylyl)-L-tyrosyl-[protein] + diphosphate. The enzyme catalyses L-histidyl-[protein] + UTP = N(tele)-(5'-uridylyl)-L-histidyl-[protein] + diphosphate. The catalysed reaction is L-seryl-[protein] + UTP = O-(5'-uridylyl)-L-seryl-[protein] + diphosphate. It catalyses the reaction L-tyrosyl-[protein] + UTP = O-(5'-uridylyl)-L-tyrosyl-[protein] + diphosphate. Nucleotidyltransferase involved in the post-translational modification of proteins. It can catalyze the addition of adenosine monophosphate (AMP) or uridine monophosphate (UMP) to a protein, resulting in modifications known as AMPylation and UMPylation. The protein is Protein nucleotidyltransferase YdiU of Bacillus cereus (strain ATCC 10987 / NRS 248).